A 435-amino-acid polypeptide reads, in one-letter code: MVNVVLGAQWGDEGKGKLVDLLVGKYDLVARCAGGNNAGHTIVVDGVKYDFHMLPSGLVNPKSLNLLGNGVVIHVPSFFKELEDLETKGLNDARERLFISSRAHLVFDFHQRTDKLRELELSGASTDGKNIGTTGKGIGPTYATKASRSGIRVHHLVNDNPESWTVFENMYRRLLETRKKRYGDFEYDAEGELARFKKYKEDLKPFVVDSVVFMHKAIEAKKKILVEGANALMLDIDFGTYPFVTSSNTGIAGVISGLGIPPKVIDECYGVVKAYTTRVGEGPFPTEQLNEDGEKLQEIGAEYGVTTGRKRRCGWLDLVIMKYSTLINGYTSLNITKLDVLDTFKEIPIGIGYYYKGQKLDLFPEDLIKLGKVEVEYKVLPGWQQDITKVTKYDDLPENAKKYIKFIEDFVGVPVEWVGTGPSRDNMVHKEIQRI.

GTP contacts are provided by residues 11-17 (GDEGKGK) and 39-41 (GHT). The active-site Proton acceptor is the Asp12. 2 residues coordinate Mg(2+): Asp12 and Gly39. IMP-binding positions include 12 to 15 (DEGK), 37 to 40 (NAGH), Thr134, Arg148, Asn230, Thr245, and Arg309. His40 acts as the Proton donor in catalysis. Substrate is bound at residue 305–311 (VTTGRKR). GTP contacts are provided by residues Arg311, 337–339 (KLD), and 419–421 (GTG).

Belongs to the adenylosuccinate synthetase family. Homodimer. Mg(2+) is required as a cofactor.

The protein resides in the cytoplasm. The enzyme catalyses IMP + L-aspartate + GTP = N(6)-(1,2-dicarboxyethyl)-AMP + GDP + phosphate + 2 H(+). The protein operates within purine metabolism; AMP biosynthesis via de novo pathway; AMP from IMP: step 1/2. Functionally, plays an important role in the de novo pathway and in the salvage pathway of purine nucleotide biosynthesis. Catalyzes the first committed step in the biosynthesis of AMP from IMP. The chain is Adenylosuccinate synthetase from Zygosaccharomyces rouxii (strain ATCC 2623 / CBS 732 / NBRC 1130 / NCYC 568 / NRRL Y-229).